We begin with the raw amino-acid sequence, 172 residues long: Large ribosomal subunit protein uL10 (172 aa).

The protein belongs to the universal ribosomal protein uL10 family. In terms of assembly, part of the ribosomal stalk of the 50S ribosomal subunit. The N-terminus interacts with L11 and the large rRNA to form the base of the stalk. The C-terminus forms an elongated spine to which L12 dimers bind in a sequential fashion forming a multimeric L10(L12)X complex.

Its function is as follows. Forms part of the ribosomal stalk, playing a central role in the interaction of the ribosome with GTP-bound translation factors. The polypeptide is Large ribosomal subunit protein uL10 (Macrococcus caseolyticus (strain JCSC5402) (Macrococcoides caseolyticum)).